Here is a 325-residue protein sequence, read N- to C-terminus: Beta-ketoacyl-[acyl-carrier-protein] synthase III (325 aa).

Residues C116 and H252 contribute to the active site. The interval 253-257 (QANLR) is ACP-binding. Residue N282 is part of the active site.

The protein belongs to the thiolase-like superfamily. FabH family. In terms of assembly, homodimer.

It is found in the cytoplasm. It carries out the reaction butanoyl-CoA + malonyl-[ACP] + H(+) = 3-oxohexanoyl-[ACP] + CO2 + CoA. The enzyme catalyses hexanoyl-CoA + malonyl-[ACP] + H(+) = 3-oxooctanoyl-[ACP] + CO2 + CoA. It catalyses the reaction octanoyl-CoA + malonyl-[ACP] + H(+) = 3-oxodecanoyl-[ACP] + CO2 + CoA. The catalysed reaction is decanoyl-CoA + malonyl-[ACP] + H(+) = 3-oxododecanoyl-[ACP] + CO2 + CoA. It carries out the reaction 2-methylpropanoyl-CoA + malonyl-[ACP] + H(+) = 4-methyl-3-oxopentanoyl-[ACP] + CO2 + CoA. The enzyme catalyses 3-methylbutanoyl-CoA + malonyl-[ACP] + H(+) = 5-methyl-3-oxohexanoyl-[ACP] + CO2 + CoA. It catalyses the reaction malonyl-[ACP] + acetyl-CoA + H(+) = 3-oxobutanoyl-[ACP] + CO2 + CoA. It participates in lipid metabolism; fatty acid biosynthesis. In terms of biological role, catalyzes the condensation reaction of fatty acid synthesis by the addition to an acyl acceptor of two carbons from malonyl-ACP. Catalyzes the first condensation reaction which initiates fatty acid synthesis and may therefore play a role in governing the total rate of fatty acid production. Possesses both acetoacetyl-ACP synthase and acetyl transacylase activities. Can use a wide range of acyl-CoAs as the primer substrate in vitro, with a slight preference for short, medium-straight chain acyl-CoAs. Can also use branched-chain acyl-CoAs and acetyl-CoA. The polypeptide is Beta-ketoacyl-[acyl-carrier-protein] synthase III (Xanthomonas campestris pv. campestris (strain 8004)).